The chain runs to 153 residues: Regulatory protein RecX (153 aa).

This sequence belongs to the RecX family.

The protein localises to the cytoplasm. In terms of biological role, modulates RecA activity. The polypeptide is Regulatory protein RecX (Pseudomonas aeruginosa (strain UCBPP-PA14)).